A 516-amino-acid polypeptide reads, in one-letter code: MNISLNTCILILKEHHLLKSSAVQDTVQTIMEAVSYDSRDVQNNSLFFCKGAGFRPTYLTMAKENGAIAYVAEQPYPEGTGMHALIVRNVSKAMALLSAAFYSFPQDDLFLVGFTGTKGKTTSAYFLKGMLDQLNGGRTALLSSVDNILGPAPEDTFKSSLTTPESLDLFRDMRRAVDNGMTHMVMEVSSQAYKKSRVFGLTYDLGFFLNISPDHIGVNEHPNFEDYLHCKLQLLVNSRKCIINAETDRFADVYAAATTTTNPDSIYLFARDGFENPDLKKPIDFRYKSVETDLAETKFTLTTASSKAHKLPISGEYTLQMIGDFNETNATGAIIGAGLAGMSYEDCAKGIRHVTIPGRMETVTTQKHGLIVVDYAHNKASMLALMRFMRREFTTPRVIVVVGAPGDKGISRRPGFSESLTAEADKAYLTTDDPGFENAQDICEEIDAGIDHSKCETVIELDREKAIKEAISEAGPDDVVLLCGKGADAFQKIRGVDTPYAGDIVIARQVIQELEK.

Residue S38 participates in UDP-N-acetyl-alpha-D-muramoyl-L-alanyl-D-glutamate binding. Residue 116–122 (GTKGKTT) participates in ATP binding. Residues 162 to 163 (TT), S189, and R197 each bind UDP-N-acetyl-alpha-D-muramoyl-L-alanyl-D-glutamate. K231 bears the N6-carboxylysine mark.

This sequence belongs to the MurCDEF family. MurE subfamily. In terms of processing, carboxylation is probably crucial for Mg(2+) binding and, consequently, for the gamma-phosphate positioning of ATP.

Its subcellular location is the cytoplasm. It participates in cell wall biogenesis; peptidoglycan biosynthesis. Functionally, catalyzes the addition of an amino acid to the nucleotide precursor UDP-N-acetylmuramoyl-L-alanyl-D-glutamate (UMAG) in the biosynthesis of bacterial cell-wall peptidoglycan. This is UDP-N-acetylmuramyl-tripeptide synthetase from Lactobacillus delbrueckii subsp. bulgaricus (strain ATCC 11842 / DSM 20081 / BCRC 10696 / JCM 1002 / NBRC 13953 / NCIMB 11778 / NCTC 12712 / WDCM 00102 / Lb 14).